The primary structure comprises 161 residues: uncharacterized protein (161 aa).

It belongs to the mimivirus L761/L899 family.

It is found in the virion. This is an uncharacterized protein from Acanthamoeba polyphaga (Amoeba).